The primary structure comprises 98 residues: U10-barytoxin-Tl1a (98 aa).

The N-terminal stretch at 1–21 (MKTLVLVAVLGVASLYLLSSA) is a signal peptide. Positions 22 to 50 (SEVQQLSPAEEEFRAFVSTFGGLFETEER) are excised as a propeptide. Intrachain disulfides connect Cys57–Cys71, Cys64–Cys76, and Cys70–Cys89.

It belongs to the neurotoxin 10 (Hwtx-1) family. 27 (ICK-3) subfamily. Expressed by the venom gland.

The protein localises to the secreted. Functionally, ion channel inhibitor. In Trittame loki (Brush-footed trapdoor spider), this protein is U10-barytoxin-Tl1a.